The sequence spans 126 residues: Holo-[acyl-carrier-protein] synthase (126 aa).

Mg(2+) contacts are provided by Asp9 and Glu57.

Belongs to the P-Pant transferase superfamily. AcpS family. It depends on Mg(2+) as a cofactor.

It is found in the cytoplasm. It catalyses the reaction apo-[ACP] + CoA = holo-[ACP] + adenosine 3',5'-bisphosphate + H(+). Functionally, transfers the 4'-phosphopantetheine moiety from coenzyme A to a Ser of acyl-carrier-protein. In Idiomarina loihiensis (strain ATCC BAA-735 / DSM 15497 / L2-TR), this protein is Holo-[acyl-carrier-protein] synthase.